A 160-amino-acid polypeptide reads, in one-letter code: MGVFNYEAETPSVIPAARLFKSYVLDGDKLIPKVAPQVISSVENVGGNGGPGTIKNITFAEGIPFKFVKERVDEVDNANFKYNYTVIEGDVLGDKLEKVSHELKIVAAPGGGSIVKISSKFHAKGYHEVNAEKMKGAKEMAEKLLRAVESYLLAHTAEYN.

Belongs to the BetVI family.

The polypeptide is Major pollen allergen Car b 1 isoforms 1A and 1B (Carpinus betulus (European hornbeam)).